The sequence spans 160 residues: Cyclic pyranopterin monophosphate synthase (160 aa).

Residues 77-79 and 114-115 contribute to the substrate site; these read MCH and ME. Residue Asp-129 is part of the active site.

The protein belongs to the MoaC family. As to quaternary structure, homohexamer; trimer of dimers.

It carries out the reaction (8S)-3',8-cyclo-7,8-dihydroguanosine 5'-triphosphate = cyclic pyranopterin phosphate + diphosphate. It participates in cofactor biosynthesis; molybdopterin biosynthesis. In terms of biological role, catalyzes the conversion of (8S)-3',8-cyclo-7,8-dihydroguanosine 5'-triphosphate to cyclic pyranopterin monophosphate (cPMP). The sequence is that of Cyclic pyranopterin monophosphate synthase from Listeria monocytogenes serovar 1/2a (strain ATCC BAA-679 / EGD-e).